Reading from the N-terminus, the 443-residue chain is Glutamate-1-semialdehyde 2,1-aminomutase (443 aa).

The span at 1-16 shows a compositional bias: low complexity; it reads MSVNADSQHSNNSSHQ. Residues 1-22 form a disordered region; sequence MSVNADSQHSNNSSHQASEKAF. K277 bears the N6-(pyridoxal phosphate)lysine mark.

The protein belongs to the class-III pyridoxal-phosphate-dependent aminotransferase family. HemL subfamily. As to quaternary structure, homodimer. Requires pyridoxal 5'-phosphate as cofactor.

It localises to the cytoplasm. The catalysed reaction is (S)-4-amino-5-oxopentanoate = 5-aminolevulinate. Its pathway is porphyrin-containing compound metabolism; protoporphyrin-IX biosynthesis; 5-aminolevulinate from L-glutamyl-tRNA(Glu): step 2/2. This chain is Glutamate-1-semialdehyde 2,1-aminomutase, found in Corynebacterium jeikeium (strain K411).